We begin with the raw amino-acid sequence, 335 residues long: Glyceraldehyde-3-phosphate dehydrogenase (335 aa).

Residues 12–13 (RI), Asp-34, and Arg-79 each bind NAD(+). Residues 150-152 (SCT), Thr-181, 210-211 (TG), and Arg-233 contribute to the D-glyceraldehyde 3-phosphate site. Residue Cys-151 is the Nucleophile of the active site. Asn-315 contributes to the NAD(+) binding site.

This sequence belongs to the glyceraldehyde-3-phosphate dehydrogenase family. In terms of assembly, homotetramer.

The protein localises to the cytoplasm. It carries out the reaction D-glyceraldehyde 3-phosphate + phosphate + NAD(+) = (2R)-3-phospho-glyceroyl phosphate + NADH + H(+). Its pathway is carbohydrate degradation; glycolysis; pyruvate from D-glyceraldehyde 3-phosphate: step 1/5. This is Glyceraldehyde-3-phosphate dehydrogenase (GPD) from Ogataea parapolymorpha (strain ATCC 26012 / BCRC 20466 / JCM 22074 / NRRL Y-7560 / DL-1) (Yeast).